The following is a 493-amino-acid chain: Galactose-1-phosphate uridylyltransferase 2 (493 aa).

It belongs to the galactose-1-phosphate uridylyltransferase type 2 family.

It is found in the cytoplasm. It catalyses the reaction alpha-D-galactose 1-phosphate + UDP-alpha-D-glucose = alpha-D-glucose 1-phosphate + UDP-alpha-D-galactose. It participates in carbohydrate metabolism; galactose metabolism. This chain is Galactose-1-phosphate uridylyltransferase 2 (galT2), found in Streptococcus pneumoniae (strain ATCC BAA-255 / R6).